We begin with the raw amino-acid sequence, 190 residues long: Isopentenyl-diphosphate Delta-isomerase (190 aa).

The Mn(2+) site is built by His27 and His34. The Nudix hydrolase domain maps to 32–171 (PLHFAFSSYI…PFVFSPWMVD (140 aa)). Residue Cys69 is part of the active site. Mg(2+) is bound at residue Cys69. His71 lines the Mn(2+) pocket. Glu89 contacts Mg(2+). Mn(2+)-binding residues include Glu119 and Glu121. The active site involves Glu121.

It belongs to the IPP isomerase type 1 family. Requires Mg(2+) as cofactor. It depends on Mn(2+) as a cofactor.

It localises to the cytoplasm. The enzyme catalyses isopentenyl diphosphate = dimethylallyl diphosphate. It functions in the pathway isoprenoid biosynthesis; dimethylallyl diphosphate biosynthesis; dimethylallyl diphosphate from isopentenyl diphosphate: step 1/1. Its function is as follows. Catalyzes the 1,3-allylic rearrangement of the homoallylic substrate isopentenyl (IPP) to its highly electrophilic allylic isomer, dimethylallyl diphosphate (DMAPP). This is Isopentenyl-diphosphate Delta-isomerase from Corynebacterium efficiens (strain DSM 44549 / YS-314 / AJ 12310 / JCM 11189 / NBRC 100395).